The chain runs to 420 residues: Synaptosomal-associated protein 47 (420 aa).

T-SNARE coiled-coil homology domains are found at residues 110-172 and 357-419; these read AEAA…LTEL and TSEP…MKKL. Positions 338–357 are disordered; sequence ATHCEPSSGSQEGRPLQLQT. Polar residues predominate over residues 342-357; the sequence is EPSSGSQEGRPLQLQT.

Belongs to the SVAP1 family. Forms a complex containing SNAP47, VAMP2 and STX1A. Associates with the BLOC-1 complex. Interacts with BLOC1S6.

The protein localises to the endomembrane system. It localises to the cytoplasm. It is found in the perinuclear region. May play a role in intracellular membrane fusion. The polypeptide is Synaptosomal-associated protein 47 (SNAP47) (Bos taurus (Bovine)).